The chain runs to 521 residues: Glutamate--cysteine ligase (521 aa).

The protein belongs to the glutamate--cysteine ligase type 1 family. Type 1 subfamily.

It catalyses the reaction L-cysteine + L-glutamate + ATP = gamma-L-glutamyl-L-cysteine + ADP + phosphate + H(+). It participates in sulfur metabolism; glutathione biosynthesis; glutathione from L-cysteine and L-glutamate: step 1/2. This chain is Glutamate--cysteine ligase, found in Aliivibrio salmonicida (strain LFI1238) (Vibrio salmonicida (strain LFI1238)).